Consider the following 137-residue polypeptide: Cucumber peeling cupredoxin (137 aa).

Gln-1 is subject to Pyrrolidone carboxylic acid. One can recognise a Phytocyanin domain in the interval 3–107 (TVHIVGDNTG…GQKLSINVVA (105 aa)). Residues His-46, Cys-89, His-94, and Gln-99 each contribute to the Cu cation site. A disulfide bridge connects residues Cys-60 and Cys-95. Asn-109 carries N-linked (GlcNAc...) asparagine glycosylation. The segment at 112-137 (VSMPPPSSSPPSSVMPPPVMPPPSPS) is disordered. Positions 114–137 (MPPPSSSPPSSVMPPPVMPPPSPS) are enriched in pro residues. 4-hydroxyproline; partial is present on Pro-115. Pro-116, Pro-117, Pro-121, and Pro-122 each carry 4-hydroxyproline. A 4-hydroxyproline; partial modification is found at Pro-127. 5 positions are modified to 4-hydroxyproline: Pro-128, Pro-129, Pro-133, Pro-134, and Pro-136.

The sequence is that of Cucumber peeling cupredoxin from Cucumis sativus (Cucumber).